The sequence spans 208 residues: ATP synthase subunit b 1 (208 aa).

A compositionally biased stretch (polar residues) spans 1–18; the sequence is MFVSTAFAQTATESQPAS. Residues 1 to 26 are disordered; that stretch reads MFVSTAFAQTATESQPASTAGEHGAA. The helical transmembrane segment at 56-78 threads the bilayer; the sequence is SQVLWLAITFGLFYLFLSRVVLP.

It belongs to the ATPase B chain family. As to quaternary structure, F-type ATPases have 2 components, F(1) - the catalytic core - and F(0) - the membrane proton channel. F(1) has five subunits: alpha(3), beta(3), gamma(1), delta(1), epsilon(1). F(0) has three main subunits: a(1), b(2) and c(10-14). The alpha and beta chains form an alternating ring which encloses part of the gamma chain. F(1) is attached to F(0) by a central stalk formed by the gamma and epsilon chains, while a peripheral stalk is formed by the delta and b chains.

The protein localises to the cell inner membrane. F(1)F(0) ATP synthase produces ATP from ADP in the presence of a proton or sodium gradient. F-type ATPases consist of two structural domains, F(1) containing the extramembraneous catalytic core and F(0) containing the membrane proton channel, linked together by a central stalk and a peripheral stalk. During catalysis, ATP synthesis in the catalytic domain of F(1) is coupled via a rotary mechanism of the central stalk subunits to proton translocation. Functionally, component of the F(0) channel, it forms part of the peripheral stalk, linking F(1) to F(0). This is ATP synthase subunit b 1 from Brucella abortus (strain 2308).